A 236-amino-acid chain; its full sequence is Small ribosomal subunit protein uS2c (236 aa).

It belongs to the universal ribosomal protein uS2 family.

Its subcellular location is the plastid. It is found in the chloroplast. This is Small ribosomal subunit protein uS2c (rps2) from Phalaenopsis aphrodite subsp. formosana (Moth orchid).